A 397-amino-acid chain; its full sequence is Chorismate synthase (397 aa).

Residues Arg40 and Arg46 each coordinate NADP(+). FMN-binding positions include 129-131 (RAS), 257-258 (QA), Gly302, 317-321 (KPIAT), and Arg343.

Belongs to the chorismate synthase family. In terms of assembly, homotetramer. FMNH2 is required as a cofactor.

It catalyses the reaction 5-O-(1-carboxyvinyl)-3-phosphoshikimate = chorismate + phosphate. Its pathway is metabolic intermediate biosynthesis; chorismate biosynthesis; chorismate from D-erythrose 4-phosphate and phosphoenolpyruvate: step 7/7. Functionally, catalyzes the anti-1,4-elimination of the C-3 phosphate and the C-6 proR hydrogen from 5-enolpyruvylshikimate-3-phosphate (EPSP) to yield chorismate, which is the branch point compound that serves as the starting substrate for the three terminal pathways of aromatic amino acid biosynthesis. This reaction introduces a second double bond into the aromatic ring system. This Chlorobium phaeobacteroides (strain BS1) protein is Chorismate synthase.